Consider the following 430-residue polypeptide: Glutamate-1-semialdehyde 2,1-aminomutase (430 aa).

Residue K265 is modified to N6-(pyridoxal phosphate)lysine.

It belongs to the class-III pyridoxal-phosphate-dependent aminotransferase family. HemL subfamily. Homodimer. Requires pyridoxal 5'-phosphate as cofactor.

The protein localises to the cytoplasm. The catalysed reaction is (S)-4-amino-5-oxopentanoate = 5-aminolevulinate. Its pathway is porphyrin-containing compound metabolism; protoporphyrin-IX biosynthesis; 5-aminolevulinate from L-glutamyl-tRNA(Glu): step 2/2. In Shewanella oneidensis (strain ATCC 700550 / JCM 31522 / CIP 106686 / LMG 19005 / NCIMB 14063 / MR-1), this protein is Glutamate-1-semialdehyde 2,1-aminomutase.